The sequence spans 354 residues: S-adenosylmethionine:tRNA ribosyltransferase-isomerase (354 aa).

The protein belongs to the QueA family. As to quaternary structure, monomer.

The protein resides in the cytoplasm. The catalysed reaction is 7-aminomethyl-7-carbaguanosine(34) in tRNA + S-adenosyl-L-methionine = epoxyqueuosine(34) in tRNA + adenine + L-methionine + 2 H(+). It participates in tRNA modification; tRNA-queuosine biosynthesis. Transfers and isomerizes the ribose moiety from AdoMet to the 7-aminomethyl group of 7-deazaguanine (preQ1-tRNA) to give epoxyqueuosine (oQ-tRNA). The chain is S-adenosylmethionine:tRNA ribosyltransferase-isomerase from Salmonella paratyphi A (strain ATCC 9150 / SARB42).